A 605-amino-acid polypeptide reads, in one-letter code: DNA primase (605 aa).

The CHC2-type zinc-finger motif lies at 38-62 (CPFHDEKTPSFTVSEDKQICHCFGC). In terms of domain architecture, Toprim spans 260-341 (DEIVLLEGFM…NVFVIQLPSG (82 aa)). Mg(2+) contacts are provided by Glu-266, Asp-310, and Asp-312.

Belongs to the DnaG primase family. In terms of assembly, monomer. Interacts with DnaB. Zn(2+) serves as cofactor. It depends on Mg(2+) as a cofactor.

The catalysed reaction is ssDNA + n NTP = ssDNA/pppN(pN)n-1 hybrid + (n-1) diphosphate.. In terms of biological role, RNA polymerase that catalyzes the synthesis of short RNA molecules used as primers for DNA polymerase during DNA replication. The chain is DNA primase from Staphylococcus aureus.